The following is a 471-amino-acid chain: Adenosylhomocysteinase (471 aa).

3 residues coordinate substrate: Thr-60, Asp-135, and Glu-196. 197-199 (TTT) contacts NAD(+). Substrate is bound by residues Lys-226 and Asp-230. NAD(+)-binding positions include Asn-231, 260 to 265 (GYGDVG), Glu-283, Asn-318, 339 to 341 (IGH), and Asn-387.

The protein belongs to the adenosylhomocysteinase family. The cofactor is NAD(+).

The protein localises to the cytoplasm. The catalysed reaction is S-adenosyl-L-homocysteine + H2O = L-homocysteine + adenosine. It functions in the pathway amino-acid biosynthesis; L-homocysteine biosynthesis; L-homocysteine from S-adenosyl-L-homocysteine: step 1/1. Its function is as follows. May play a key role in the regulation of the intracellular concentration of adenosylhomocysteine. This is Adenosylhomocysteinase from Chlorobium phaeovibrioides (strain DSM 265 / 1930) (Prosthecochloris vibrioformis (strain DSM 265)).